A 168-amino-acid chain; its full sequence is Pathogenesis-related protein 1C (168 aa).

The first 30 residues, 1–30 (MEFVLFSQMSSFFLVSTLLLFLIISHSCHA), serve as a signal peptide directing secretion. Residues 38 to 156 (LDAHNTARAD…NGGYIVSCNY (119 aa)) enclose the SCP domain.

It belongs to the CRISP family. Post-translationally, three disulfide bonds are present.

Its subcellular location is the vacuole. In terms of biological role, probably involved in the defense reaction of plants against pathogens. The chain is Pathogenesis-related protein 1C from Nicotiana tabacum (Common tobacco).